An 89-amino-acid polypeptide reads, in one-letter code: Elongation factor 1-beta (89 aa).

It belongs to the EF-1-beta/EF-1-delta family.

In terms of biological role, promotes the exchange of GDP for GTP in EF-1-alpha/GDP, thus allowing the regeneration of EF-1-alpha/GTP that could then be used to form the ternary complex EF-1-alpha/GTP/AAtRNA. This chain is Elongation factor 1-beta, found in Methanosarcina barkeri (strain Fusaro / DSM 804).